The chain runs to 334 residues: MRFVDEVVIKLQAGKGGNGCVSFRREKYVPCGGPDGGDGGNGGSIYLKADENVNTLIDYRYKREYYAENGRPGEGRNCYGKAGEDLYLVVPVGTSVFDIDTNKKIGEVLQHGQTFKLVSGGKRGIGNTHFKSSTNQAPRKFTLGEEGEYKEVRLELNLLADVALLGLPNAGKSTLIRSVSEATPKVADYPFTTMYPHLGVVKVGVDSFVMADIPGVIEGAAEGAGLGLRFLKHLTRARCVLHVVDICPFNESDPVENYFAVEKELEKYSQELFDKLRFLVINKIDLLADKVEQKCQEFVEQIGYQGNYYTISAAMKKGTDELAKKLNEFLQKQE.

Residues 1-159 (MRFVDEVVIK…KEVRLELNLL (159 aa)) form the Obg domain. The region spanning 160 to 331 (ADVALLGLPN…LAKKLNEFLQ (172 aa)) is the OBG-type G domain. GTP contacts are provided by residues 166–173 (GLPNAGKS), 191–195 (FTTMY), 212–215 (DIPG), 282–285 (NKID), and 312–314 (SAA). Residues Ser173 and Thr193 each contribute to the Mg(2+) site.

Belongs to the TRAFAC class OBG-HflX-like GTPase superfamily. OBG GTPase family. Monomer. Mg(2+) serves as cofactor.

The protein localises to the cytoplasm. Functionally, an essential GTPase which binds GTP, GDP and possibly (p)ppGpp with moderate affinity, with high nucleotide exchange rates and a fairly low GTP hydrolysis rate. Plays a role in control of the cell cycle, stress response, ribosome biogenesis and in those bacteria that undergo differentiation, in morphogenesis control. This Francisella tularensis subsp. holarctica (strain FTNF002-00 / FTA) protein is GTPase Obg.